A 126-amino-acid polypeptide reads, in one-letter code: Large ribosomal subunit protein bL17 (126 aa).

The protein belongs to the bacterial ribosomal protein bL17 family. Part of the 50S ribosomal subunit. Contacts protein L32.

The protein is Large ribosomal subunit protein bL17 of Limosilactobacillus fermentum (strain NBRC 3956 / LMG 18251) (Lactobacillus fermentum).